A 701-amino-acid chain; its full sequence is Elongation factor G (701 aa).

Residues 8–290 (SLYRNIGISA…AVVELLPAPT (283 aa)) enclose the tr-type G domain. Residues 17 to 24 (AHIDAGKT), 88 to 92 (DTPGH), and 142 to 145 (NKMD) each bind GTP.

The protein belongs to the TRAFAC class translation factor GTPase superfamily. Classic translation factor GTPase family. EF-G/EF-2 subfamily.

The protein localises to the cytoplasm. Its function is as follows. Catalyzes the GTP-dependent ribosomal translocation step during translation elongation. During this step, the ribosome changes from the pre-translocational (PRE) to the post-translocational (POST) state as the newly formed A-site-bound peptidyl-tRNA and P-site-bound deacylated tRNA move to the P and E sites, respectively. Catalyzes the coordinated movement of the two tRNA molecules, the mRNA and conformational changes in the ribosome. This Neisseria meningitidis serogroup C (strain 053442) protein is Elongation factor G.